Reading from the N-terminus, the 270-residue chain is Putative phosphoenolpyruvate synthase regulatory protein (270 aa).

150–157 contacts ADP; sequence GVSRCGKT.

Belongs to the pyruvate, phosphate/water dikinase regulatory protein family. PSRP subfamily.

It catalyses the reaction [pyruvate, water dikinase] + ADP = [pyruvate, water dikinase]-phosphate + AMP + H(+). The enzyme catalyses [pyruvate, water dikinase]-phosphate + phosphate + H(+) = [pyruvate, water dikinase] + diphosphate. In terms of biological role, bifunctional serine/threonine kinase and phosphorylase involved in the regulation of the phosphoenolpyruvate synthase (PEPS) by catalyzing its phosphorylation/dephosphorylation. The chain is Putative phosphoenolpyruvate synthase regulatory protein from Shewanella sediminis (strain HAW-EB3).